Reading from the N-terminus, the 445-residue chain is Bifunctional protein GlmU (445 aa).

The interval 1–218 (MRALVLAAGK…LLEITGVNTR (218 aa)) is pyrophosphorylase. UDP-N-acetyl-alpha-D-glucosamine is bound by residues 6–9 (LAAG), K20, Q69, 74–75 (GT), 96–98 (YGD), G134, E147, N162, and N216. D98 is a Mg(2+) binding site. N216 is a binding site for Mg(2+). Residues 219–239 (KTLVWLEEQLRMRKIEELLEN) form a linker region. The N-acetyltransferase stretch occupies residues 240–445 (GVTILDPATT…GWVLKKRKEE (206 aa)). R321 and K339 together coordinate UDP-N-acetyl-alpha-D-glucosamine. Catalysis depends on H351, which acts as the Proton acceptor. Y354 and N365 together coordinate UDP-N-acetyl-alpha-D-glucosamine. Acetyl-CoA contacts are provided by residues A368, 374–375 (NY), S393, A411, and R428.

The protein in the N-terminal section; belongs to the N-acetylglucosamine-1-phosphate uridyltransferase family. In the C-terminal section; belongs to the transferase hexapeptide repeat family. As to quaternary structure, homotrimer. It depends on Mg(2+) as a cofactor.

The protein resides in the cytoplasm. It catalyses the reaction alpha-D-glucosamine 1-phosphate + acetyl-CoA = N-acetyl-alpha-D-glucosamine 1-phosphate + CoA + H(+). The catalysed reaction is N-acetyl-alpha-D-glucosamine 1-phosphate + UTP + H(+) = UDP-N-acetyl-alpha-D-glucosamine + diphosphate. The protein operates within nucleotide-sugar biosynthesis; UDP-N-acetyl-alpha-D-glucosamine biosynthesis; N-acetyl-alpha-D-glucosamine 1-phosphate from alpha-D-glucosamine 6-phosphate (route II): step 2/2. Its pathway is nucleotide-sugar biosynthesis; UDP-N-acetyl-alpha-D-glucosamine biosynthesis; UDP-N-acetyl-alpha-D-glucosamine from N-acetyl-alpha-D-glucosamine 1-phosphate: step 1/1. It participates in bacterial outer membrane biogenesis; LPS lipid A biosynthesis. Functionally, catalyzes the last two sequential reactions in the de novo biosynthetic pathway for UDP-N-acetylglucosamine (UDP-GlcNAc). The C-terminal domain catalyzes the transfer of acetyl group from acetyl coenzyme A to glucosamine-1-phosphate (GlcN-1-P) to produce N-acetylglucosamine-1-phosphate (GlcNAc-1-P), which is converted into UDP-GlcNAc by the transfer of uridine 5-monophosphate (from uridine 5-triphosphate), a reaction catalyzed by the N-terminal domain. The protein is Bifunctional protein GlmU of Thermotoga petrophila (strain ATCC BAA-488 / DSM 13995 / JCM 10881 / RKU-1).